Reading from the N-terminus, the 765-residue chain is FHF complex subunit HOOK interacting protein 2A (765 aa).

2 disordered regions span residues 193–236 and 532–561; these read TLKG…DHLS and TDISPENTLPNQEWLSSSPPATPDHPKNDG. Composition is skewed to polar residues over residues 196–208 and 535–550; these read GQDSLSTDTGQSR and SPENTLPNQEWLSSSP.

The protein belongs to the FHIP family. Expressed in all tissues tested, highly expressed brain. In terms of tissue distribution, only detected at high levels in testis.

Its function is as follows. Required for proper functioning of the nervous system. The sequence is that of FHF complex subunit HOOK interacting protein 2A from Homo sapiens (Human).